The chain runs to 166 residues: NADPH-dependent 7-cyano-7-deazaguanine reductase (166 aa).

The active-site Thioimide intermediate is Cys-57. The active-site Proton donor is the Asp-64. Substrate contacts are provided by residues 79–81 (VES) and 98–99 (HE).

The protein belongs to the GTP cyclohydrolase I family. QueF type 1 subfamily.

The protein localises to the cytoplasm. It carries out the reaction 7-aminomethyl-7-carbaguanine + 2 NADP(+) = 7-cyano-7-deazaguanine + 2 NADPH + 3 H(+). It functions in the pathway tRNA modification; tRNA-queuosine biosynthesis. Its function is as follows. Catalyzes the NADPH-dependent reduction of 7-cyano-7-deazaguanine (preQ0) to 7-aminomethyl-7-deazaguanine (preQ1). The chain is NADPH-dependent 7-cyano-7-deazaguanine reductase from Staphylococcus saprophyticus subsp. saprophyticus (strain ATCC 15305 / DSM 20229 / NCIMB 8711 / NCTC 7292 / S-41).